A 1762-amino-acid chain; its full sequence is ADAMTS-like protein 1 (1762 aa).

Positions 1-28 (MECCRRATPGTLLLFLAFLLLSSRTARS) are cleaved as a signal peptide. The TSP type-1 1 domain maps to 33-82 (DGLWDAWGPWSECSRTCGGGASYSLRRCLSSKSCEGRNIRYRTCSNVDCP). Residues tryptophan 39 and tryptophan 42 are each glycosylated (C-linked (Man) tryptophan). 3 disulfide bridges follow: cysteine 45–cysteine 76, cysteine 49–cysteine 81, and cysteine 60–cysteine 66. Residue threonine 48 is glycosylated (O-linked (Fuc...) threonine). The N-linked (GlcNAc...) asparagine glycan is linked to asparagine 251. Threonine 312 is a glycosylation site (O-linked (Fuc...) threonine). 6 consecutive TSP type-1 domains span residues 376–424 (PLPR…MYTP), 436–493 (DCPK…TPCY), 522–584 (EEPS…GPCS), 607–665 (ELYD…NLDP), 666–729 (CPAR…FNCP), and 788–850 (CPSE…ATCA). Serine 391 carries O-linked (Fuc...) serine glycosylation. Threonine 451 carries O-linked (Fuc...) threonine glycosylation. Disulfide bonds link cysteine 534–cysteine 578, cysteine 538–cysteine 583, and cysteine 549–cysteine 567. 7 cysteine pairs are disulfide-bonded: cysteine 678-cysteine 723, cysteine 682-cysteine 728, cysteine 693-cysteine 712, cysteine 800-cysteine 844, cysteine 804-cysteine 849, cysteine 815-cysteine 832, and cysteine 899-cysteine 947. The Ig-like C2-type 1 domain maps to 861–963 (PHIAAARKVY…EHFVIKLIGG (103 aa)). A disordered region spans residues 1120-1164 (LKPSERRTSPVTLSPHKHVSGFSSSLRTSSTGDAGGGSRRPHRKP). Low complexity predominate over residues 1139-1151 (SGFSSSLRTSSTG). Ig-like C2-type domains are found at residues 1164–1266 (PTIL…IAVT), 1286–1369 (PAVT…TQLL), and 1395–1485 (PSVL…ASLV). Cystine bridges form between cysteine 1202-cysteine 1250, cysteine 1308-cysteine 1353, and cysteine 1418-cysteine 1469. 2 TSP type-1 domains span residues 1545-1608 (CPSR…QLCV) and 1666-1726 (CSVH…TPCE). Positions 1726 to 1762 (ENMECRDTTRYCEKVKQLKLCQLSQFKSRCCGTCGKA) constitute a PLAC domain.

In terms of assembly, monomer. Post-translationally, C-, N- and O-glycosylated. O-fucosylated by POFUT2 on a serine or a threonine residue found within the consensus sequence C1-X(2)-(S/T)-C2-G of the TSP type-1 repeat domains where C1 and C2 are the first and second cysteine residue of the repeat, respectively. Fucosylated repeats can then be further glycosylated by the addition of a beta-1,3-glucose residue by the glucosyltransferase, B3GALTL. Fucosylation mediates the efficient secretion of ADAMTSL1. Can also be C-glycosylated with one or two mannose molecules on tryptophan residues within the consensus sequence W-X-X-W of the TPRs, and N-glycosylated. These other glycosylations can also facilitate secretion. Disulfide bonds are present. As to expression, expressed primarily in adult skeletal muscle.

Its subcellular location is the secreted. The protein localises to the extracellular space. It is found in the extracellular matrix. The protein is ADAMTS-like protein 1 (ADAMTSL1) of Homo sapiens (Human).